The following is a 526-amino-acid chain: Lycopene epsilon cyclase, chloroplastic (526 aa).

108–136 (LVVIGCGPAGLALAAESAKLGLNVGLVGP) contacts NAD(+). A run of 2 helical transmembrane segments spans residues 443–463 (FFLFGLALILQLDIEGIRSFF) and 477–497 (FLGSSLSSADLMLFAFYMFII).

The protein belongs to the lycopene cyclase family.

The protein resides in the plastid. The protein localises to the chloroplast membrane. It catalyses the reaction a carotenoid psi-end group = a carotenoid epsilon-end group. Its pathway is carotenoid biosynthesis; alpha-zeacarotene biosynthesis. It functions in the pathway carotenoid biosynthesis; delta-carotene biosynthesis. In terms of biological role, catalyzes the single cyclization reaction which converts lycopene to delta-carotene and neurosporene to alpha-zeacarotene. Required for lutein biosynthesis. This is Lycopene epsilon cyclase, chloroplastic from Solanum lycopersicum (Tomato).